The primary structure comprises 281 residues: Probable endonuclease 4 (281 aa).

Zn(2+)-binding residues include H69, H109, E145, D179, H182, H216, D229, H231, and E261.

This sequence belongs to the AP endonuclease 2 family. The cofactor is Zn(2+).

It catalyses the reaction Endonucleolytic cleavage to 5'-phosphooligonucleotide end-products.. Its function is as follows. Endonuclease IV plays a role in DNA repair. It cleaves phosphodiester bonds at apurinic or apyrimidinic (AP) sites, generating a 3'-hydroxyl group and a 5'-terminal sugar phosphate. The polypeptide is Probable endonuclease 4 (Nautilia profundicola (strain ATCC BAA-1463 / DSM 18972 / AmH)).